Consider the following 221-residue polypeptide: Tumor protein p53-inducible nuclear protein 2 (221 aa).

The LIR signature appears at 26–41 (VSEEDEVDGWLIIDLQ). Residues 41 to 68 (QDSYTAPPDPGASPAPAGRPPPAPSLMD) are disordered. The span at 47-64 (PPDPGASPAPAGRPPPAP) shows a compositional bias: pro residues. Phosphoserine is present on Ser136. The tract at residues 177-210 (RQRAERHTLSAKVLQRQNRARESRSRRPKHQGSF) is disordered.

As to quaternary structure, interacts with VMP1, GABARAP, GABARAPL1, GABARAPL2, MAP1LC3A, MAP1LC3B, MAP1LC3C and THRA.

It localises to the cytoplasm. The protein resides in the cytosol. Its subcellular location is the nucleus. It is found in the PML body. The protein localises to the cytoplasmic vesicle. It localises to the autophagosome. Dual regulator of transcription and autophagy. Positively regulates autophagy and is required for autophagosome formation and processing. May act as a scaffold protein that recruits MAP1LC3A, GABARAP and GABARAPL2 and brings them to the autophagosome membrane by interacting with VMP1 where, in cooperation with the BECN1-PI3-kinase class III complex, they trigger autophagosome development. Acts as a transcriptional activator of THRA. The protein is Tumor protein p53-inducible nuclear protein 2 (Tp53inp2) of Mus musculus (Mouse).